The sequence spans 274 residues: Large ribosomal subunit protein uL2 (274 aa).

The segment at 214–274 is disordered; it reads LGRRPRTRPV…NKYIVERRKK (61 aa).

It belongs to the universal ribosomal protein uL2 family. In terms of assembly, part of the 50S ribosomal subunit. Forms a bridge to the 30S subunit in the 70S ribosome.

One of the primary rRNA binding proteins. Required for association of the 30S and 50S subunits to form the 70S ribosome, for tRNA binding and peptide bond formation. It has been suggested to have peptidyltransferase activity; this is somewhat controversial. Makes several contacts with the 16S rRNA in the 70S ribosome. The chain is Large ribosomal subunit protein uL2 from Flavobacterium johnsoniae (strain ATCC 17061 / DSM 2064 / JCM 8514 / BCRC 14874 / CCUG 350202 / NBRC 14942 / NCIMB 11054 / UW101) (Cytophaga johnsonae).